The primary structure comprises 471 residues: V-type ATP synthase beta chain (471 aa).

The protein belongs to the ATPase alpha/beta chains family.

Produces ATP from ADP in the presence of a proton gradient across the membrane. The V-type beta chain is a regulatory subunit. The protein is V-type ATP synthase beta chain (atpB) of Deinococcus radiodurans (strain ATCC 13939 / DSM 20539 / JCM 16871 / CCUG 27074 / LMG 4051 / NBRC 15346 / NCIMB 9279 / VKM B-1422 / R1).